We begin with the raw amino-acid sequence, 176 residues long: Dual-action ribosomal maturation protein DarP (176 aa).

Belongs to the DarP family.

The protein resides in the cytoplasm. Member of a network of 50S ribosomal subunit biogenesis factors which assembles along the 30S-50S interface, preventing incorrect 23S rRNA structures from forming. Promotes peptidyl transferase center (PTC) maturation. In Actinobacillus pleuropneumoniae serotype 5b (strain L20), this protein is Dual-action ribosomal maturation protein DarP.